We begin with the raw amino-acid sequence, 686 residues long: Asparagine-rich protein (686 aa).

The signal sequence occupies residues 1–18 (MKGTSALLLIGFFHATIS). 3 disordered regions span residues 34–73 (KRGN…DKTA), 125–148 (SLTS…SSSI), and 201–236 (ITRQ…QPPN). Polar residues predominate over residues 37 to 49 (NLNTGGQITSNSA). Basic and acidic residues predominate over residues 62-73 (EPPKRRNTDKTA).

In terms of tissue distribution, prismatic layer of shell (at protein level). Expressed primarily in the mantle with highest level in the mantle edge and lower level in the mantle pallium.

It is found in the secreted. The polypeptide is Asparagine-rich protein (Margaritifera margaritifera (Freshwater pearl mussel)).